Here is a 117-residue protein sequence, read N- to C-terminus: Transcription elongation factor A protein-like 8 (117 aa).

Basic and acidic residues-rich tracts occupy residues 1–10 (MQKSCEENEG) and 61–75 (FKED…PEEM). Residues 1–75 (MQKSCEENEG…PVRHLDPEEM (75 aa)) form a disordered region. Positions 73–100 (EEMIRGVDELERLREEIRRVRNKFVMMH) form a coiled coil.

This sequence belongs to the TFS-II family. TFA subfamily.

It localises to the nucleus. Its function is as follows. May be involved in transcriptional regulation. The protein is Transcription elongation factor A protein-like 8 (TCEAL8) of Homo sapiens (Human).